Reading from the N-terminus, the 59-residue chain is Potassium channel toxin alpha-KTx 4.5 (59 aa).

The N-terminal stretch at 1–22 (MKAFYGVLIIFILISMLDLSQQ) is a signal peptide. Cystine bridges form between C29-C50, C35-C55, and C39-C57. The tract at residues 48-55 (GKCMNGKC) is interaction with Ca(2+)-activated K(+) channels.

Expressed by the venom gland.

It is found in the secreted. Its function is as follows. Inhibits with low potency Kv1.1/KCNA1, Kv1.2/KCNA2, Kv1.3/KCNA3 and Kv11.1/KCNH2/ERG1 voltage-gated potassium channels. In Tityus costatus (Brazilian scorpion), this protein is Potassium channel toxin alpha-KTx 4.5.